The sequence spans 137 residues: Small heat shock protein IbpA (137 aa).

The 110-residue stretch at 28–137 (SQGNGGYPPY…TLKPRRIEIK (110 aa)) folds into the sHSP domain.

Belongs to the small heat shock protein (HSP20) family. Monomer. Forms homomultimers of about 100-150 subunits at optimal growth temperatures. Conformation changes to monomers at high temperatures or high ionic concentrations.

It localises to the cytoplasm. In terms of biological role, associates with aggregated proteins, together with IbpB, to stabilize and protect them from irreversible denaturation and extensive proteolysis during heat shock and oxidative stress. Aggregated proteins bound to the IbpAB complex are more efficiently refolded and reactivated by the ATP-dependent chaperone systems ClpB and DnaK/DnaJ/GrpE. Its activity is ATP-independent. This chain is Small heat shock protein IbpA, found in Serratia proteamaculans (strain 568).